Here is a 354-residue protein sequence, read N- to C-terminus: Chorismate synthase (354 aa).

R48 is an NADP(+) binding site. Residues 125-127 (RSS), 239-240 (NA), G280, 295-299 (KPVAT), and R321 contribute to the FMN site.

Belongs to the chorismate synthase family. In terms of assembly, homotetramer. The cofactor is FMNH2.

The enzyme catalyses 5-O-(1-carboxyvinyl)-3-phosphoshikimate = chorismate + phosphate. Its pathway is metabolic intermediate biosynthesis; chorismate biosynthesis; chorismate from D-erythrose 4-phosphate and phosphoenolpyruvate: step 7/7. Its function is as follows. Catalyzes the anti-1,4-elimination of the C-3 phosphate and the C-6 proR hydrogen from 5-enolpyruvylshikimate-3-phosphate (EPSP) to yield chorismate, which is the branch point compound that serves as the starting substrate for the three terminal pathways of aromatic amino acid biosynthesis. This reaction introduces a second double bond into the aromatic ring system. The sequence is that of Chorismate synthase from Christiangramia forsetii (strain DSM 17595 / CGMCC 1.15422 / KT0803) (Gramella forsetii).